We begin with the raw amino-acid sequence, 388 residues long: Succinate--CoA ligase [ADP-forming] subunit beta (388 aa).

An ATP-grasp domain is found at 9 to 244 (KEILRKYNVP…LDEEDPAEIE (236 aa)). Residues Lys-46, 53 to 55 (GRG), Glu-99, Ala-102, and Glu-107 contribute to the ATP site. Asn-199 and Asp-213 together coordinate Mg(2+). Substrate is bound by residues Asn-264 and 321 to 323 (GIM).

Belongs to the succinate/malate CoA ligase beta subunit family. Heterotetramer of two alpha and two beta subunits. It depends on Mg(2+) as a cofactor.

The enzyme catalyses succinate + ATP + CoA = succinyl-CoA + ADP + phosphate. The catalysed reaction is GTP + succinate + CoA = succinyl-CoA + GDP + phosphate. The protein operates within carbohydrate metabolism; tricarboxylic acid cycle; succinate from succinyl-CoA (ligase route): step 1/1. Its function is as follows. Succinyl-CoA synthetase functions in the citric acid cycle (TCA), coupling the hydrolysis of succinyl-CoA to the synthesis of either ATP or GTP and thus represents the only step of substrate-level phosphorylation in the TCA. The beta subunit provides nucleotide specificity of the enzyme and binds the substrate succinate, while the binding sites for coenzyme A and phosphate are found in the alpha subunit. The chain is Succinate--CoA ligase [ADP-forming] subunit beta from Ralstonia pickettii (strain 12J).